Here is a 579-residue protein sequence, read N- to C-terminus: Probable cholinesterase (579 aa).

The first 19 residues, 1-19 (MTDHKIIMLLLLGIYCIQA), serve as a signal peptide directing secretion. 2 N-linked (GlcNAc...) asparagine; by host glycosylation sites follow: N77 and N144. S217 serves as the catalytic Acyl-ester intermediate. N-linked (GlcNAc...) asparagine; by host glycosylation is found at N257, N269, and N283. E337 (charge relay system) is an active-site residue. 2 N-linked (GlcNAc...) asparagine; by host glycosylation sites follow: N373 and N394. Residue H451 is the Charge relay system of the active site. Residue N469 is glycosylated (N-linked (GlcNAc...) asparagine; by host).

The protein belongs to the type-B carboxylesterase/lipase family.

It carries out the reaction an acylcholine + H2O = a carboxylate + choline + H(+). Its function is as follows. May be involved in the disruption of the host membrane. The polypeptide is Probable cholinesterase (Acanthamoeba polyphaga mimivirus (APMV)).